Reading from the N-terminus, the 402-residue chain is Advanced glycosylation end product-specific receptor (402 aa).

Positions 1-22 (MPTGTVARAWVLVLALWGAVAG) are cleaved as a signal peptide. Residues 23–109 (GQNITARIGE…ATNRLGKEVK (87 aa)) enclose the Ig-like V-type domain. Residues 23–341 (GQNITARIGE…DGSGLGTLAL (319 aa)) lie on the Extracellular side of the membrane. N-linked (GlcNAc...) asparagine glycans are attached at residues N25 and N80. 2 disulfide bridges follow: C38/C98 and C143/C206. Ig-like C2-type domains follow at residues 123-219 (PEIV…RPLN) and 233-315 (PEGI…PPVN). Residues 342–362 (ALGILGGLGIAALLIGAILWR) form a helical membrane-spanning segment. Residues 363-402 (KRQPRLEERKAPESQEDEEERAELNQSEEAEMPENGAGGP) lie on the Cytoplasmic side of the membrane. The disordered stretch occupies residues 368-402 (LEERKAPESQEDEEERAELNQSEEAEMPENGAGGP). Phosphoserine occurs at positions 376 and 389. Positions 376 to 394 (SQEDEEERAELNQSEEAEM) are enriched in acidic residues.

Constitutive homodimer; disulfide-linked. Forms homooligomers. Interacts with S100A1 and APP. Interacts with S100B, S100A12 and S100A14. Interacts with TIRAP. Interacts with HMGB1. Interacts with LGP2; this interaction plays an important role in AGER-mediated pro-inflammatory responses and cytokine release. Interacts with double-strand break repair protein MRE11 which is a core component of the MRN complex; the interaction enhances MRE11 endonuclease activity and promotes DNA repair. Interacts with the MCM2-7 complex via interaction with complex member MCM2; the interaction is increased following DNA replication stress and stabilizes the MCM2-7 complex at replication forks. Post-translationally, phosphorylated on its cytoplasmic domain by PKCzeta/PRKCZ upon ligand binding. Phosphorylated by ATM following DNA damage. In terms of processing, targeted by the ubiquitin E3 ligase subunit FBXO10 to mediate its ubiquitination and degradation. As to expression, endothelial cells and cardiomyocytes. Expressed in brain.

Its subcellular location is the cell membrane. It localises to the cell projection. The protein localises to the phagocytic cup. The protein resides in the early endosome. It is found in the nucleus. Its function is as follows. Cell surface pattern recognition receptor that senses endogenous stress signals with a broad ligand repertoire including advanced glycation end products, S100 proteins, high-mobility group box 1 protein/HMGB1, amyloid beta/APP oligomers, nucleic acids, histones, phospholipids and glycosaminoglycans. Advanced glycosylation end products are nonenzymatically glycosylated proteins which accumulate in vascular tissue in aging and at an accelerated rate in diabetes. These ligands accumulate at inflammatory sites during the pathogenesis of various diseases including diabetes, vascular complications, neurodegenerative disorders and cancers, and RAGE transduces their binding into pro-inflammatory responses. Upon ligand binding, uses TIRAP and MYD88 as adapters to transduce the signal ultimately leading to the induction of inflammatory cytokines IL6, IL8 and TNFalpha through activation of NF-kappa-B. Interaction with S100A12 on endothelium, mononuclear phagocytes, and lymphocytes triggers cellular activation, with generation of key pro-inflammatory mediators. Interaction with S100B after myocardial infarction may play a role in myocyte apoptosis by activating ERK1/2 and p53/TP53 signaling. Contributes to the translocation of amyloid-beta peptide (ABPP) across the cell membrane from the extracellular to the intracellular space in cortical neurons. ABPP-initiated RAGE signaling, especially stimulation of p38 mitogen-activated protein kinase (MAPK), has the capacity to drive a transport system delivering ABPP as a complex with RAGE to the intraneuronal space. Participates in endothelial albumin transcytosis together with HMGB1 through the RAGE/SRC/Caveolin-1 pathway, leading to endothelial hyperpermeability. Mediates the loading of HMGB1 in extracellular vesicles (EVs) that shuttle HMGB1 to hepatocytes by transferrin-mediated endocytosis and subsequently promote hepatocyte pyroptosis by activating the NLRP3 inflammasome. Binds to DNA and promotes extracellular hypomethylated DNA (CpG DNA) uptake by cells via the endosomal route to activate inflammatory responses. Mediates phagocytosis by non-professional phagocytes (NPP) and this is enhanced by binding to ligands including RNA, DNA, HMGB1 and histones. Promotes NPP-mediated phagocytosis of Saccharomyces cerevisiae spores by binding to RNA attached to the spore wall. Also promotes NPP-mediated phagocytosis of apoptotic cells. Following DNA damage, recruited to DNA double-strand break sites where it colocalizes with the MRN repair complex via interaction with double-strand break repair protein MRE11. Enhances the endonuclease activity of MRE11, promoting the end resection of damaged DNA. Promotes DNA damage repair in trophoblasts which enhances trophoblast invasion and contributes to placental development and maintenance. Protects cells from DNA replication stress by localizing to damaged replication forks where it stabilizes the MCM2-7 complex and promotes faithful progression of the replication fork. This chain is Advanced glycosylation end product-specific receptor (Ager), found in Rattus norvegicus (Rat).